The following is a 162-amino-acid chain: Lymphocyte antigen 86 (162 aa).

The first 20 residues, 1 to 20, serve as a signal peptide directing secretion; the sequence is MKGFTATLFLWTLIFPSCSG. Disulfide bonds link C33/C58, C45/C154, and C102/C112. N96 carries an N-linked (GlcNAc...) asparagine glycan. The N-linked (GlcNAc...) asparagine glycan is linked to N156.

M-shaped tetramer of two CD180-LY86 heterodimers. As to expression, highly expressed in B-cells, monocytes and tonsil.

The protein resides in the secreted. The protein localises to the extracellular space. Functionally, may cooperate with CD180 and TLR4 to mediate the innate immune response to bacterial lipopolysaccharide (LPS) and cytokine production. Important for efficient CD180 cell surface expression. This Homo sapiens (Human) protein is Lymphocyte antigen 86 (LY86).